Here is a 403-residue protein sequence, read N- to C-terminus: Glyceraldehyde-3-phosphate dehydrogenase A, chloroplastic (403 aa).

Residues 1–66 (MASSMLSATT…GGPRRAPTEA (66 aa)) constitute a chloroplast transit peptide. NADP(+) contacts are provided by residues 77-78 (RI), aspartate 102, and arginine 147. Residues 219–221 (SCT), threonine 250, arginine 265, 278–279 (TG), and arginine 301 contribute to the D-glyceraldehyde 3-phosphate site. The Nucleophile role is filled by cysteine 220. Position 383 (asparagine 383) interacts with NADP(+).

Belongs to the glyceraldehyde-3-phosphate dehydrogenase family. As to quaternary structure, tetramer of either four A chains (GAPDH 2) or two A and two B chains (GAPDH 1).

The protein resides in the plastid. Its subcellular location is the chloroplast. It catalyses the reaction D-glyceraldehyde 3-phosphate + phosphate + NADP(+) = (2R)-3-phospho-glyceroyl phosphate + NADPH + H(+). It participates in carbohydrate biosynthesis; Calvin cycle. This is Glyceraldehyde-3-phosphate dehydrogenase A, chloroplastic (GAPA) from Zea mays (Maize).